A 1558-amino-acid chain; its full sequence is Arginine-glutamic acid dipeptide repeats protein (1558 aa).

The span at 1–36 (MTADKDKDKDKEKDRDRDRDRERDKRDKARESENAR) shows a compositional bias: basic and acidic residues. Residues 1–90 (MTADKDKDKD…KKKSRYERTD (90 aa)) are disordered. A phosphoserine mark is found at Ser53 and Ser56. Residues 74–85 (KSRKKPPKKKSR) show a composition bias toward basic residues. Positions 103–283 (VVYRPGDCVY…PETRRLNSTQ (181 aa)) constitute a BAH domain. Thr120 is subject to Phosphothreonine. A phosphoserine mark is found at Ser142 and Ser304. Residues 284–387 (GEIRVGPSHQ…KALQRLVKKP (104 aa)) form the ELM2 domain. The 53-residue stretch at 391 to 443 (LIEKCWTEDEVKRFVKGLRQYGKNFFRIRKELLPSKETGELITFYYYWKKTPE) folds into the SANT domain. Residues 464 to 495 (TRTASTPVNTPSRPPSSEFLDLSSASEDDFDS) form a disordered region. A compositionally biased stretch (polar residues) spans 465–474 (RTASTPVNTP). The segment covering 479-488 (SSEFLDLSSA) has biased composition (low complexity). The segment at 507-532 (CRHCFTTTSKDWHHGGRENILLCTDC) adopts a GATA-type zinc-finger fold. A disordered region spans residues 542-1125 (LPPIEKPVDP…PSHASQSARF (584 aa)). A Glycyl lysine isopeptide (Lys-Gly) (interchain with G-Cter in SUMO2) cross-link involves residue Lys560. Thr593 is subject to Phosphothreonine. Ser594, Ser600, and Ser613 each carry phosphoserine. Residues 609 to 623 (SGRNSPSAASTSSND) show a composition bias toward low complexity. Over residues 624-640 (SKAETVKKSAKKVKEEA) the composition is skewed to basic and acidic residues. Lys637 participates in a covalent cross-link: Glycyl lysine isopeptide (Lys-Gly) (interchain with G-Cter in SUMO2). Ser642, Ser656, Ser675, and Ser679 each carry phosphoserine. A compositionally biased stretch (basic and acidic residues) spans 652–673 (EKVASDTEDTDRITSKKTKTQE). Residues 688–708 (SDSRSVNDEGSSDPKDIDQDN) are compositionally biased toward basic and acidic residues. Over residues 709–720 (RSTSPSIPSPQD) the composition is skewed to polar residues. The span at 726 to 752 (DSSAQQQMLQAQPPALQAPSGAASAPS) shows a compositional bias: low complexity. The segment covering 778–792 (SPATSQPPNQTQSTV) has biased composition (polar residues). A compositionally biased stretch (pro residues) spans 806 to 823 (LHPPRLPSPHPPLQPMTA). 3 stretches are compositionally biased toward low complexity: residues 824–857 (PPSQ…LLQH), 865–874 (GLPSQPSQGQ), and 891–901 (QLPASQSALQP). Pro residues predominate over residues 902 to 932 (QQPPREQPLPPAPLAMPHIKPPPTTPIPQLP). The segment covering 962-972 (KPLSSLSTHHP) has biased composition (low complexity). Over residues 1012–1023 (HPTTGLHQVPSQ) the composition is skewed to polar residues. A compositionally biased stretch (pro residues) spans 1027-1053 (PQHPFVPGGPPPITPPSCPPTSTPPAG). Residues 1054-1077 (PSSSSQPPCSAAVSSGGSVPGAPS) show a composition bias toward low complexity. Residues Ser1098, Ser1105, and Ser1107 each carry the phosphoserine modification. Residues 1098–1109 (SPPPPPRSPSPE) show a composition bias toward pro residues. Thr1111 bears the Phosphothreonine mark. A coiled-coil region spans residues 1148-1203 (GSKLAKKREEAIEKAKREAEQKAREEREREKEKEKEREREREREREAERAAKASSS). At Lys1150 the chain carries N6-acetyllysine. Positions 1154 to 1198 (KREEAIEKAKREAEQKAREEREREKEKEKEREREREREREAERAA) are enriched in basic and acidic residues. The disordered stretch occupies residues 1154–1238 (KREEAIEKAK…TTIAAVPPYI (85 aa)). Phosphotyrosine is present on Tyr1251. Ser1258 is modified (phosphoserine).

In terms of assembly, interacts with HDAC1 and ATN1. Interaction with ATN1 is improved when the poly-Gln region of ATN1 is extended. Interacts with FAT1.

Its subcellular location is the nucleus. The protein resides in the PML body. Functionally, plays a role as a transcriptional repressor during development. May play a role in the control of cell survival. The polypeptide is Arginine-glutamic acid dipeptide repeats protein (Rere) (Mus musculus (Mouse)).